The following is a 707-amino-acid chain: Translation initiation factor eIF2B subunit epsilon (707 aa).

2 disordered regions span residues 489-526 (HDDIESDESGDEGDKSGGKIKNNKNNDDNPIEPDSVKF) and 686-707 (AEEESDDSDDSDDDDDDSDESD). Residues 516-693 (DNPIEPDSVK…KSAEEESDDS (178 aa)) enclose the W2 domain. Residues 688-707 (EESDDSDDSDDDDDDSDESD) show a composition bias toward acidic residues.

It belongs to the eIF-2B gamma/epsilon subunits family. Component of the translation initiation factor 2B (eIF2B) complex which is a heterodecamer of two sets of five different subunits: alpha, beta, gamma, delta and epsilon. Subunits alpha, beta and delta comprise a regulatory subcomplex and subunits epsilon and gamma comprise a catalytic subcomplex. Within the complex, the hexameric regulatory complex resides at the center, with the two heterodimeric catalytic subcomplexes bound on opposite sides.

The protein localises to the cytoplasm. The protein resides in the cytosol. Functionally, acts as a component of the translation initiation factor 2B (eIF2B) complex, which catalyzes the exchange of GDP for GTP on eukaryotic initiation factor 2 (eIF2) gamma subunit. Its guanine nucleotide exchange factor activity is repressed when bound to eIF2 complex phosphorylated on the alpha subunit, thereby limiting the amount of methionyl-initiator methionine tRNA available to the ribosome and consequently global translation is repressed. The chain is Translation initiation factor eIF2B subunit epsilon (eif2b5) from Dictyostelium discoideum (Social amoeba).